A 284-amino-acid chain; its full sequence is Ribosomal RNA small subunit methyltransferase A (284 aa).

Positions 23, 25, 50, 71, 92, and 121 each coordinate S-adenosyl-L-methionine.

It belongs to the class I-like SAM-binding methyltransferase superfamily. rRNA adenine N(6)-methyltransferase family. RsmA subfamily.

It is found in the cytoplasm. It catalyses the reaction adenosine(1518)/adenosine(1519) in 16S rRNA + 4 S-adenosyl-L-methionine = N(6)-dimethyladenosine(1518)/N(6)-dimethyladenosine(1519) in 16S rRNA + 4 S-adenosyl-L-homocysteine + 4 H(+). In terms of biological role, specifically dimethylates two adjacent adenosines (A1518 and A1519) in the loop of a conserved hairpin near the 3'-end of 16S rRNA in the 30S particle. May play a critical role in biogenesis of 30S subunits. This Verminephrobacter eiseniae (strain EF01-2) protein is Ribosomal RNA small subunit methyltransferase A.